The primary structure comprises 196 residues: UMP-CMP kinase (196 aa).

13-18 (GAGKGT) lines the ATP pocket. The tract at residues 33–63 (SAGDLLRDERKKPDSQYGELIESYIRDGRIV) is NMP. A ribonucleoside 5'-phosphate-binding positions include Arg39, 61 to 63 (RIV), and 93 to 96 (GFPR). Asn100 lines the CMP pocket. The tract at residues 133-143 (ERGKSSGRSDD) is LID. An ATP-binding site is contributed by Arg134. Residues Arg140 and Arg151 each contribute to the a ribonucleoside 5'-phosphate site. Lys179 is a binding site for ATP.

This sequence belongs to the adenylate kinase family. UMP-CMP kinase subfamily. Monomer. Requires Mg(2+) as cofactor.

The protein resides in the cytoplasm. Its subcellular location is the nucleus. It catalyses the reaction CMP + ATP = CDP + ADP. It carries out the reaction dCMP + ATP = dCDP + ADP. The catalysed reaction is UMP + ATP = UDP + ADP. The enzyme catalyses a 2'-deoxyribonucleoside 5'-diphosphate + ATP = a 2'-deoxyribonucleoside 5'-triphosphate + ADP. It catalyses the reaction a ribonucleoside 5'-diphosphate + ATP = a ribonucleoside 5'-triphosphate + ADP. Catalyzes the phosphorylation of pyrimidine nucleoside monophosphates at the expense of ATP. Plays an important role in de novo pyrimidine nucleotide biosynthesis. Has preference for UMP and CMP as phosphate acceptors. Also displays broad nucleoside diphosphate kinase activity. The protein is UMP-CMP kinase (cmpk1) of Xenopus tropicalis (Western clawed frog).